Consider the following 294-residue polypeptide: Dolichol-phosphate mannosyltransferase (294 aa).

Positions 1 to 27 (MSIALDMDASAKMRKQPGSSGWSTSST) are disordered. Over 1-263 (MSIALDMDAS…QQLVELYRFR (263 aa)) the chain is Cytoplasmic. The segment covering 17 to 27 (PGSSGWSTSST) has biased composition (low complexity). Residues Pro35, Glu39, Val70, Asp72, Asp123, Ala124, Asp125, Gln127, Arg151, Lys211, Arg237, and Lys243 each coordinate GDP-alpha-D-mannose. Residues Asp125 and Gln127 each coordinate Mg(2+). The Mn(2+) site is built by Asp125 and Gln127. Residues 264–284 (FGTVPIVFVLIVLLVLALYIW) form a helical membrane-spanning segment. Residues 285–294 (SHVLAPMLGA) lie on the Lumenal side of the membrane.

The protein belongs to the glycosyltransferase 2 family. The cofactor is Mg(2+). Requires Mn(2+) as cofactor. It depends on Ca(2+) as a cofactor.

It localises to the endoplasmic reticulum membrane. It carries out the reaction a di-trans,poly-cis-dolichyl phosphate + GDP-alpha-D-mannose = a di-trans,poly-cis-dolichyl beta-D-mannosyl phosphate + GDP. Its pathway is protein modification; protein glycosylation. Functionally, transfers mannose from GDP-mannose to dolichol monophosphate to form dolichol phosphate mannose (Dol-P-Man) which is the mannosyl donor in pathways leading to N-glycosylation, glycosyl phosphatidylinositol membrane anchoring, and O-mannosylation of proteins. In Mycosarcoma maydis (Corn smut fungus), this protein is Dolichol-phosphate mannosyltransferase (DPM1).